A 365-amino-acid chain; its full sequence is Medium chain reductase pydE (365 aa).

In terms of domain architecture, Enoyl reductase (ER) spans 21–362 (KLIDSLPVPP…SKRARGKVLI (342 aa)). Residues 185–188 (SGSV), Tyr226, 274–275 (IG), and 354–355 (KR) contribute to the NADP(+) site.

This sequence belongs to the zinc-containing alcohol dehydrogenase family. Monomer.

It participates in mycotoxin biosynthesis. In terms of biological role, medium chain reductase; part of the gene cluster that mediates the biosynthesis of pyrrocidines, fungal natural products containing a macrocyclic para-cyclophane connected to a decahydrofluorene ring system that show potent antibiotic activities toward Gram-negative bacteria. Within the pathway, pydE functions synergistically with pydB, pydX and pydZ to form the cyclophane. The pathway begins with the PKS-NRPS pydA which, with the help of the trans-enoyl reductase pydC, synthesizes the polyketide-tyrosyl acyl thioester product which can be reductively off-loaded by the terminal reductase (R) domain in pydA. The alpha/beta hydrolase pydG is then required to catalyze the subsequent Knoevenagel condensation that affords the 3-pyrrolin-2-one ring, whereas the four proteins pydB, pydE, pydX and pydZ then function synergistically to form the cyclophane. PydB and the membrane-bound pydX and pydZ are lipid-binding proteins that can sequester and mold the pdyG product into the inverse S-shape. Binding of the medium chain reductase pydE to the complex would trigger the cascade oxidative cyclization. PydY is involved in the Diels-Alder cycloaddition that forms the decahydrofluorene core. Additional non-enzymatic hydroxylation yields pyrrocidine A2 which can be further reduced into pyrrocidine B by an endogenous reductase. In Acremonium sp, this protein is Medium chain reductase pydE.